Reading from the N-terminus, the 290-residue chain is Arylamine N-acetyltransferase, pineal gland isozyme NAT-10 (290 aa).

Cys68 functions as the Acyl-thioester intermediate in the catalytic mechanism. Active-site residues include His107 and Asp122.

This sequence belongs to the arylamine N-acetyltransferase family.

The catalysed reaction is an arylamine + acetyl-CoA = an N-acetylarylamine + CoA. The polypeptide is Arylamine N-acetyltransferase, pineal gland isozyme NAT-10 (Gallus gallus (Chicken)).